The chain runs to 228 residues: uncharacterized protein (228 aa).

This is an uncharacterized protein from Mycobacterium tuberculosis (strain CDC 1551 / Oshkosh).